The sequence spans 84 residues: Small ribosomal subunit protein uS17 (84 aa).

It belongs to the universal ribosomal protein uS17 family. As to quaternary structure, part of the 30S ribosomal subunit.

One of the primary rRNA binding proteins, it binds specifically to the 5'-end of 16S ribosomal RNA. This chain is Small ribosomal subunit protein uS17, found in Clostridium perfringens (strain ATCC 13124 / DSM 756 / JCM 1290 / NCIMB 6125 / NCTC 8237 / Type A).